We begin with the raw amino-acid sequence, 376 residues long: Dihydroorotate dehydrogenase (quinone) (376 aa).

Residues 78–82 and T102 contribute to the FMN site; that span reads AGFDK. Position 82 (K82) interacts with substrate. 127 to 131 lines the substrate pocket; the sequence is NRMGF. The FMN site is built by N157 and N190. N190 is a binding site for substrate. S193 acts as the Nucleophile in catalysis. N195 is a binding site for substrate. Positions 228 and 256 each coordinate FMN. 257 to 258 is a binding site for substrate; the sequence is NT. FMN contacts are provided by residues G286, G315, and 336 to 337; that span reads YT.

Belongs to the dihydroorotate dehydrogenase family. Type 2 subfamily. As to quaternary structure, monomer. FMN is required as a cofactor.

The protein localises to the cell membrane. It carries out the reaction (S)-dihydroorotate + a quinone = orotate + a quinol. It participates in pyrimidine metabolism; UMP biosynthesis via de novo pathway; orotate from (S)-dihydroorotate (quinone route): step 1/1. Catalyzes the conversion of dihydroorotate to orotate with quinone as electron acceptor. This chain is Dihydroorotate dehydrogenase (quinone), found in Nostoc sp. (strain PCC 7120 / SAG 25.82 / UTEX 2576).